We begin with the raw amino-acid sequence, 445 residues long: Argininosuccinate synthase (445 aa).

Residues 17–25 and A43 contribute to the ATP site; that span reads AFSGGLDTS. Residue Y99 participates in L-citrulline binding. Positions 129 and 131 each coordinate ATP. L-aspartate is bound by residues T131, N135, and D136. Position 135 (N135) interacts with L-citrulline. D136 is an ATP binding site. 2 residues coordinate L-citrulline: R139 and S192. D194 serves as a coordination point for ATP. 3 residues coordinate L-citrulline: T201, E203, and E280.

Belongs to the argininosuccinate synthase family. Type 2 subfamily. In terms of assembly, homotetramer.

Its subcellular location is the cytoplasm. It carries out the reaction L-citrulline + L-aspartate + ATP = 2-(N(omega)-L-arginino)succinate + AMP + diphosphate + H(+). The protein operates within amino-acid biosynthesis; L-arginine biosynthesis; L-arginine from L-ornithine and carbamoyl phosphate: step 2/3. The protein is Argininosuccinate synthase of Burkholderia cenocepacia (strain ATCC BAA-245 / DSM 16553 / LMG 16656 / NCTC 13227 / J2315 / CF5610) (Burkholderia cepacia (strain J2315)).